The following is a 380-amino-acid chain: Protein-tyrosine sulfotransferase A (380 aa).

Residues 1–6 (MRKNRE) are Cytoplasmic-facing. A helical; Signal-anchor for type II membrane protein membrane pass occupies residues 7 to 27 (LLLVLFLVVFILFYFITARTA). At 28–380 (DDPYYSNHRE…PIVDNEVSKL (353 aa)) the chain is on the lumenal side. N-linked (GlcNAc...) asparagine glycosylation occurs at Asn66. 3'-phosphoadenylyl sulfate is bound at residue 79–83 (RSGTT). Cys97 and Cys157 are disulfide-bonded. The active-site Proton donor/acceptor is the Glu100. The interval 102-106 (RVIPR) is interaction with peptide substrate. 3'-phosphoadenylyl sulfate contacts are provided by Arg184, Ser192, and Arg196. Cys226 and Cys234 are joined by a disulfide. 3'-phosphoadenylyl sulfate contacts are provided by residues Tyr239, 284 to 293 (SSDQVVKPVN), and Lys299.

It belongs to the protein sulfotransferase family.

The protein localises to the golgi apparatus membrane. It carries out the reaction L-tyrosyl-[protein] + 3'-phosphoadenylyl sulfate = O-sulfo-L-tyrosine-[protein] + adenosine 3',5'-bisphosphate + H(+). In terms of biological role, catalyzes the O-sulfation of tyrosine residues within acidic motifs of polypeptides, using 3'-phosphoadenylyl sulfate (PAPS) as cosubstrate. The chain is Protein-tyrosine sulfotransferase A (tpst-1) from Caenorhabditis elegans.